The following is a 333-amino-acid chain: Protoheme IX farnesyltransferase (333 aa).

The next 8 membrane-spanning stretches (helical) occupy residues 63-83 (LACTLGGGALAAAAAGVLNCI), 109-129 (AAFIGAISCTLAAAALLVSGV), 132-152 (LAAGLSLLGLCSYVLLYTAIL), 160-180 (IVIGGVAGAIPPLVGAAAASG), 188-208 (WLFSLVMLWTPAHFWALALLL), 214-234 (AVGIPMLPVIQGPVVTVRAIS), 245-265 (GFGVWALPEGGLLYGLLLIPF), and 292-312 (WSIFYMFGICLLLVVSRLPMA).

This sequence belongs to the UbiA prenyltransferase family. Protoheme IX farnesyltransferase subfamily.

The protein localises to the cell inner membrane. It carries out the reaction heme b + (2E,6E)-farnesyl diphosphate + H2O = Fe(II)-heme o + diphosphate. Its pathway is porphyrin-containing compound metabolism; heme O biosynthesis; heme O from protoheme: step 1/1. Its function is as follows. Converts heme B (protoheme IX) to heme O by substitution of the vinyl group on carbon 2 of heme B porphyrin ring with a hydroxyethyl farnesyl side group. The chain is Protoheme IX farnesyltransferase from Prochlorococcus marinus (strain MIT 9313).